A 424-amino-acid chain; its full sequence is Enolase (424 aa).

Gln-165 contributes to the (2R)-2-phosphoglycerate binding site. Glu-207 acts as the Proton donor in catalysis. Positions 244, 283, and 310 each coordinate Mg(2+). 4 residues coordinate (2R)-2-phosphoglycerate: Lys-335, Arg-364, Ser-365, and Lys-386. Lys-335 (proton acceptor) is an active-site residue.

Belongs to the enolase family. Requires Mg(2+) as cofactor.

It localises to the cytoplasm. The protein localises to the secreted. Its subcellular location is the cell surface. It carries out the reaction (2R)-2-phosphoglycerate = phosphoenolpyruvate + H2O. It participates in carbohydrate degradation; glycolysis; pyruvate from D-glyceraldehyde 3-phosphate: step 4/5. Catalyzes the reversible conversion of 2-phosphoglycerate (2-PG) into phosphoenolpyruvate (PEP). It is essential for the degradation of carbohydrates via glycolysis. The chain is Enolase from Chlamydia trachomatis serovar L2 (strain ATCC VR-902B / DSM 19102 / 434/Bu).